A 492-amino-acid chain; its full sequence is E3 ubiquitin-protein ligase TRIM35 (492 aa).

N-acetylmethionine is present on Met-1. Phosphoserine occurs at positions 4 and 8. The RING-type zinc finger occupies 21–61; that stretch reads CAVCYDPFRDAVTLRCGHNFCRGCVSRCWEVQVSPTCPVCK. The segment at 96–137 adopts a B box-type zinc-finger fold; it reads RFSRVCRLHRGQLSLFCLEDKELLCCSCQADPRHQGHRVQPV. Cys-101, His-104, Cys-123, and His-129 together coordinate Zn(2+). Residues 210-249 are a coiled coil; sequence AEETRQKQLLADEKMKQLTEETEVLAHEIERLQMEMKEDD. One can recognise a B30.2/SPRY domain in the interval 283–486; it reads YLGSLQYRVW…LRICPLHISV (204 aa).

In terms of assembly, interacts with PKM isoform M2, but not isoform M1; this interaction may compete with that between PKM and FGFR1, and hence reduces FGFR1-dependent tyrosine phosphorylation of PKM. Interacts with IRF7; this interaction promotes IRF7 proteasomal degradation. Interacts with TRAF3; this interaction promotes TRAF3 activation.

The protein resides in the cytoplasm. It is found in the nucleus. It carries out the reaction S-ubiquitinyl-[E2 ubiquitin-conjugating enzyme]-L-cysteine + [acceptor protein]-L-lysine = [E2 ubiquitin-conjugating enzyme]-L-cysteine + N(6)-ubiquitinyl-[acceptor protein]-L-lysine.. It functions in the pathway protein modification; protein ubiquitination. E3 ubiquitin-protein ligase that participates in multiple biological processes including cell death, glucose metabolism, and in particular, the innate immune response. Mediates 'Lys-63'-linked polyubiquitination of TRAF3 thereby promoting type I interferon production via RIG-I signaling pathway. Can also catalyze 'Lys-48'-linked polyubiquitination and proteasomal degradation of viral proteins such as influenza virus PB2. Acts as a negative feedback regulator of TLR7- and TLR9-triggered signaling. Mechanistically, promotes the 'Lys-48'-linked ubiquitination of IRF7 and induces its degradation via a proteasome-dependent pathway. Reduces FGFR1-dependent tyrosine phosphorylation of PKM, inhibiting PKM-dependent lactate production, glucose metabolism, and cell growth. The chain is E3 ubiquitin-protein ligase TRIM35 (TRIM35) from Pongo abelii (Sumatran orangutan).